A 626-amino-acid chain; its full sequence is Myelin-associated glycoprotein (626 aa).

Positions 1-19 are cleaved as a signal peptide; sequence MIFLTALPLFWIMISASRG. Residues 20 to 325 are interaction with RTN4R and RTN4RL2; that stretch reads GHWGAWMPSS…RTVGLSVMYA (306 aa). Topologically, residues 20–516 are extracellular; that stretch reads GHWGAWMPSS…HRLMWAKIGP (497 aa). Residues 22 to 120 form the Ig-like V-type domain; it reads WGAWMPSSIS…LGGKYYFRGD (99 aa). 3 cysteine pairs are disulfide-bonded: cysteine 37/cysteine 165, cysteine 42/cysteine 100, and cysteine 159/cysteine 217. An a ganglioside GT1b (d18:1(4E))-binding site is contributed by 65-67; that stretch reads YPK. The N-linked (GlcNAc...) asparagine glycan is linked to asparagine 99. N-linked (GlcNAc...) asparagine; partial glycosylation occurs at asparagine 106. A ganglioside GT1b (d18:1(4E)) is bound by residues arginine 118 and 124-128; that span reads YNQYT. 4 Ig-like C2-type domains span residues 139-237, 241-325, 327-412, and 413-508; these read NTPN…MDVK, VIVE…VMYA, WKPT…VEFA, and PVLL…GAHR. 2 N-linked (GlcNAc...) asparagine glycosylation sites follow: asparagine 223 and asparagine 246. Cysteine 261 and cysteine 305 are oxidised to a cystine. The N-linked (GlcNAc...) asparagine glycan is linked to asparagine 315. Cysteines 347 and 392 form a disulfide. N-linked (GlcNAc...) asparagine glycosylation occurs at asparagine 406. Cystine bridges form between cysteine 421-cysteine 430 and cysteine 432-cysteine 488. Residues asparagine 450 and asparagine 454 are each glycosylated (N-linked (GlcNAc...) asparagine). The helical transmembrane segment at 517 to 536 threads the bilayer; it reads VGAVVAFAILIAIVCYITQT. Cysteine 531 is lipidated: S-palmitoyl cysteine. The Cytoplasmic segment spans residues 537–626; it reads RRKKNVTESP…LAEYAEIRVK (90 aa). Phosphoserine is present on residues serine 545, serine 547, and serine 549. Positions 577–626 are required for normal axon myelination in the central nervous system; the sequence is LGSERRLLGLRGEPPELDLSYSHSDLGKRPTKDSYTLTEELAEYAEIRVK. Positions 582–608 are disordered; that stretch reads RLLGLRGEPPELDLSYSHSDLGKRPTK.

The protein belongs to the immunoglobulin superfamily. SIGLEC (sialic acid binding Ig-like lectin) family. As to quaternary structure, monomer and homodimer. Interacts (via the first three N-terminal Ig-like domains) with RTN4R and RTN4RL2. Interacts with RTN4R. Interacts with isoform 2 of BSG. N-glycosylated. In terms of processing, phosphorylated on tyrosine residues. Post-translationally, ubiquitinated, leading to proteasomal degradation. As to expression, both isoform 1 and isoform 2 are detected in myelinated structures in the central and peripheral nervous system, in periaxonal myelin and at Schmidt-Lanterman incisures. Detected in optic nerve, in oligodendroglia and in periaxonal myelin sheaths. Detected in compact myelin (at protein level). Both isoform 1 and isoform 2 are detected in the central and peripheral nervous system.

It localises to the cell membrane. It is found in the membrane raft. Functionally, adhesion molecule that mediates interactions between myelinating cells and neurons by binding to neuronal sialic acid-containing gangliosides and to the glycoproteins RTN4R and RTN4RL2. Not required for initial myelination, but seems to play a role in the maintenance of normal axon myelination. Protects motoneurons against apoptosis, also after injury; protection against apoptosis is probably mediated via interaction with neuronal RTN4R and RTN4RL2. Required to prevent degeneration of myelinated axons in adults; this probably depends on binding to gangliosides on the axon cell membrane. Negative regulator of neurite outgrowth; in dorsal root ganglion neurons the inhibition is mediated primarily via binding to neuronal RTN4R or RTN4RL2 and to a lesser degree via binding to neuronal gangliosides. In cerebellar granule cells the inhibition is mediated primarily via binding to neuronal gangliosides. In sensory neurons, inhibition of neurite extension depends only partially on RTN4R, RTN4RL2 and gangliosides. Inhibits axon longitudinal growth. Inhibits axon outgrowth by binding to RTN4R. Preferentially binds to alpha-2,3-linked sialic acid. Binds ganglioside Gt1b. This chain is Myelin-associated glycoprotein (MAG), found in Homo sapiens (Human).